The sequence spans 126 residues: Fluoride-specific ion channel FluC (126 aa).

Helical transmembrane passes span 4–24, 35–55, 68–88, and 100–120; these read ILAI…IGLW, YGTF…LTLI, MLVT…YESF, and IGYM…GVGL. 2 residues coordinate Na(+): Gly-75 and Thr-78.

Belongs to the fluoride channel Fluc/FEX (TC 1.A.43) family.

The protein localises to the cell membrane. It catalyses the reaction fluoride(in) = fluoride(out). With respect to regulation, na(+) is not transported, but it plays an essential structural role and its presence is essential for fluoride channel function. Its function is as follows. Fluoride-specific ion channel. Important for reducing fluoride concentration in the cell, thus reducing its toxicity. This is Fluoride-specific ion channel FluC from Chloroflexus aurantiacus (strain ATCC 29366 / DSM 635 / J-10-fl).